The following is an 874-amino-acid chain: Cellulose synthase catalytic subunit [UDP-forming] (874 aa).

4 consecutive transmembrane segments (helical) span residues 30–50 (SPFS…VFPL), 151–171 (ILGV…TQPF), 173–193 (PLSQ…VRRM), and 230–250 (LVCG…LVLG). The segment at 271-364 (QWPTVDIFVP…FVAIFDCDHV (94 aa)) is catalytic subdomain A. Residue Asp-313 is part of the active site. The substrate site is built by Asp-360 and Asp-362. The interval 441–501 (KPLDEIGGIA…GQRIRWARGM (61 aa)) is catalytic subdomain B. The active site involves Asp-457. Helical transmembrane passes span 525–545 (LNAM…TAPL), 547–567 (FLLL…LFVI), 592–612 (IYET…LINP), 634–654 (VISR…AAGV), and 668–688 (VIVS…AVAV). Positions 694 to 790 (QVRRAHRVEI…QHIDFVQCTF (97 aa)) constitute a PilZ domain. A helical membrane pass occupies residues 833–853 (SVKVIFRSLTALIAWIVSFIP).

This sequence belongs to the glycosyltransferase 2 family. Requires Mg(2+) as cofactor.

It localises to the cell inner membrane. It carries out the reaction [(1-&gt;4)-beta-D-glucosyl](n) + UDP-alpha-D-glucose = [(1-&gt;4)-beta-D-glucosyl](n+1) + UDP + H(+). The protein operates within glycan metabolism; bacterial cellulose biosynthesis. Its activity is regulated as follows. Activated by bis-(3'-5') cyclic diguanylic acid (c-di-GMP). Its function is as follows. Catalytic subunit of cellulose synthase. It polymerizes uridine 5'-diphosphate glucose to cellulose, which is produced as an extracellular component for mechanical and chemical protection at the onset of the stationary phase, when the cells exhibit multicellular behavior (rdar morphotype). Coexpression of cellulose and thin aggregative fimbriae leads to a hydrophobic network with tightly packed cells embedded in a highly inert matrix. This is Cellulose synthase catalytic subunit [UDP-forming] (bcsA) from Salmonella typhimurium (strain LT2 / SGSC1412 / ATCC 700720).